A 287-amino-acid chain; its full sequence is N-methyltransferase verN (287 aa).

Belongs to the methyltransferase superfamily. LaeA methyltransferase family.

It participates in mycotoxin biosynthesis. In terms of biological role, N-methyltransferase; part of the gene cluster that mediates the biosynthesis of 11'-deoxyverticillin A, one of the dimeric epipolythiodioxopiperazines (ETPs) from the verticillin family that act as mycotoxins. 11'-deoxyverticillin A is required for normal conidiation. The nonribosomal peptide synthetase verP is speculated to be responsible for condensation of amino acids to form the carbon skeleton of verticillin, whereas the cluster-specific tailoring enzymes are involved in further modifications leading to the production of 11'-deoxyverticillin A. The polypeptide is N-methyltransferase verN (Clonostachys rogersoniana).